The following is a 607-amino-acid chain: MLHSPHKQPQNHKCGANFLQEDCKKALAFKWLISAGHYQPPRPTESVSALTTVHAGIFKAASSIYNRGHKFYLEKKGGTMASNSLFSAVTPCQQSFFWDPSTSRRFSPPSSSLQPGKMSDVSPVVAAQQQQQQQQQQQQQQQQQQQQQQQQQQQQQEAAAAAAAAAAAAAAAAAAVPRLRPPHDNRTMVEIIADHPAELVRTDSPNFLCSVLPSHWRCNKTLPVAFKVVALGEVPDGTVVTVMAGNDENYSAELRNASAVMKNQVARFNDLRFVGRSGRGKSFTLTITVFTNPPQVATYHRAIKVTVDGPREPRRHRQKLDDSKPSLFSDRLSDLGRIPHPSMRVGVPPQNPRPSLNSAPSPFNPQGQSQITDPRQAQSSPPWSYDQSYPSYLSQMTSPSIHSTTPLSSTRGTGLPAITDVPRRISDDDTATSDFCLWPSSLSKKSQAGASELGPFSDPRQFPSISSLTESRFSNPRMHYPATFTYTPPVTSGMSLGMSATTHYHTYLPPPYPGSSQSQSGPFQTSSTPYLYYGTSSASYQFPMVPGGDRSPSRMVPPCTTTSNGSTLLNPNLPNQNDGVDADGSHSSSPTVLNSSGRMDESVWRPY.

Positions 1 to 88 (MLHSPHKQPQ…TMASNSLFSA (88 aa)) are interaction with IFI204. Positions 100–112 (PSTSRRFSPPSSS) are enriched in low complexity. The disordered stretch occupies residues 100–126 (PSTSRRFSPPSSSLQPGKMSDVSPVVA). The region spanning 187–315 (TMVEIIADHP…TVDGPREPRR (129 aa)) is the Runt domain. Residues 242 to 258 (VMAGNDENYSAELRNAS) are required for interaction with FOXO1. Positions 307–430 (VDGPREPRRH…VPRRISDDDT (124 aa)) are disordered. Lys324 participates in a covalent cross-link: Glycyl lysine isopeptide (Lys-Gly) (interchain with G-Cter in SUMO2). Residue Arg353 is modified to Asymmetric dimethylarginine. The span at 353–412 (RPSLNSAPSPFNPQGQSQITDPRQAQSSPPWSYDQSYPSYLSQMTSPSIHSTTPLSSTRG) shows a compositional bias: polar residues. The interval 422-525 (PRRISDDDTA…SQSQSGPFQT (104 aa)) is interaction with KAT6A. An interaction with KAT6B region spans residues 460–554 (RQFPSISSLT…VPGGDRSPSR (95 aa)). Position 537 is a phosphoserine; by CDK1 (Ser537). Residues 548-607 (GDRSPSRMVPPCTTTSNGSTLLNPNLPNQNDGVDADGSHSSSPTVLNSSGRMDESVWRPY) are disordered. Composition is skewed to polar residues over residues 559–578 (CTTT…NQND) and 585–597 (SHSS…NSSG). The segment covering 598-607 (RMDESVWRPY) has biased composition (basic and acidic residues).

In terms of assembly, heterodimer of an alpha and a beta subunit. The alpha subunit binds DNA as a monomer and through the Runt domain. DNA-binding is increased by heterodimerization. Interacts with XRCC6 (Ku70) and XRCC5 (Ku80). Interacts with CCNB1, KAT6A and KAT6B. Interacts with HIVEP3. Interacts with IFI204. Interaction with SATB2; the interaction results in enhanced DNA binding and transactivation by these transcription factors. Binds to HIPK3. Interacts with FOXO1 (via a C-terminal region); the interaction inhibits RUNX2 transcriptional activity towards BGLAP. Interacts with FOXP3. Interacts with TMEM119. Interacts with OLFM2. Interacts with IPO7; the interaction inhibits RUNX2 nuclear translocation in osteoblasts. Interacts with DDX5. Phosphorylated; probably by MAP kinases (MAPK). Phosphorylation by HIPK3 is required for the SPEN/MINT and FGF2 transactivation during osteoblastic differentiation. Phosphorylation at Ser-537 by CDK1 promotes endothelial cell proliferation required for tumor angiogenesis probably by facilitating cell cycle progression. As to expression, found in thymus and testis, T-cell lines but not in B-cell lines. Isoform 2 is exclusively found in bone, particularly in osteoblasts; isoforms 3 and 4 are expressed in T-cell lines; isoforms 5, 6, 7, 8 and 9 can be found in osteoblasts and osteosarcoma cell lines.

It localises to the nucleus. Its subcellular location is the cytoplasm. Transcription factor involved in osteoblastic differentiation and skeletal morphogenesis. Essential for the maturation of osteoblasts and both intramembranous and endochondral ossification. CBF binds to the core site, 5'-PYGPYGGT-3', of a number of enhancers and promoters, including murine leukemia virus, polyomavirus enhancer, T-cell receptor enhancers, osteocalcin, osteopontin, bone sialoprotein, alpha 1(I) collagen, LCK, IL-3 and GM-CSF promoters. Inhibits KAT6B-dependent transcriptional activation. In osteoblasts, supports transcription activation: synergizes with SPEN/MINT to enhance FGFR2-mediated activation of the osteocalcin FGF-responsive element (OCFRE). The protein is Runt-related transcription factor 2 (Runx2) of Mus musculus (Mouse).